The following is a 122-amino-acid chain: Large ribosomal subunit protein uL14 (122 aa).

Belongs to the universal ribosomal protein uL14 family. Part of the 50S ribosomal subunit. Forms a cluster with proteins L3 and L19. In the 70S ribosome, L14 and L19 interact and together make contacts with the 16S rRNA in bridges B5 and B8.

Functionally, binds to 23S rRNA. Forms part of two intersubunit bridges in the 70S ribosome. This Syntrophobacter fumaroxidans (strain DSM 10017 / MPOB) protein is Large ribosomal subunit protein uL14.